Here is a 478-residue protein sequence, read N- to C-terminus: Argininosuccinate lyase (478 aa).

The protein belongs to the lyase 1 family. Argininosuccinate lyase subfamily.

It is found in the cytoplasm. It catalyses the reaction 2-(N(omega)-L-arginino)succinate = fumarate + L-arginine. It functions in the pathway amino-acid biosynthesis; L-arginine biosynthesis; L-arginine from L-ornithine and carbamoyl phosphate: step 3/3. This is Argininosuccinate lyase from Rhodospirillum rubrum (strain ATCC 11170 / ATH 1.1.1 / DSM 467 / LMG 4362 / NCIMB 8255 / S1).